The chain runs to 208 residues: Putative 3-methyladenine DNA glycosylase (208 aa).

This sequence belongs to the DNA glycosylase MPG family.

The protein is Putative 3-methyladenine DNA glycosylase of Lactobacillus johnsonii (strain CNCM I-12250 / La1 / NCC 533).